Consider the following 2036-residue polypeptide: Proline-rich protein 12 (2036 aa).

3 disordered regions span residues 210 to 283 (GGGV…RALP), 331 to 587 (CSPL…GAPG), and 649 to 697 (APSP…DPQR). Residues 223–240 (QTPPYRPGPPDPPPPPRH) show a composition bias toward pro residues. The segment covering 249–258 (ASSSAAAAAA) has biased composition (low complexity). Phosphoserine occurs at positions 332 and 340. Over residues 340–365 (SPGAGEPSKAGPSGATAGASGRATGP) the composition is skewed to low complexity. Composition is skewed to gly residues over residues 367-380 (AAGGGGAGGGGGGY) and 391-400 (TGKGGYGAAA). Low complexity-rich tracts occupy residues 411 to 432 (STATPKCQSLGGPAAAYATGKA) and 441 to 458 (QAYSPGQPQGLLGPQAYG). Positions 479–490 (PPQPPSGPPPPG) are enriched in pro residues. 2 stretches are compositionally biased toward polar residues: residues 493-504 (TCQSYSPDQLQG) and 523-537 (GLPTASPSLSYSTGH). The segment covering 543 to 558 (GHGGGWGPSSLGGGGE) has biased composition (gly residues). Serine 651 bears the Phosphoserine mark. The segment covering 673–683 (GLGGSGGAGGP) has biased composition (gly residues). Threonine 738 carries the post-translational modification Phosphothreonine. Disordered stretches follow at residues 758–850 (AFLQ…PLQL), 859–878 (LEPAAPSPRLRPEESLDPPG), 886–925 (ALEPLPPAPGDTGVGPPNSEGKDPAGAYRSPSPQGTKAPR), and 952–1068 (EMFG…CSTK). Low complexity predominate over residues 802-817 (LPSVLSHAPSPSPSAS). The segment covering 833–847 (PQPPPPPPPPPPPMP) has biased composition (pro residues). Phosphoserine is present on serine 865. Residues 1037–1052 (AAPPPPPPPPPPPAPA) are compositionally biased toward pro residues. Residues serine 1077 and serine 1135 each carry the phosphoserine modification. Disordered stretches follow at residues 1120-1260 (RLPD…SLTR), 1294-1347 (RHPP…GGAL), 1376-1573 (TLPS…GEGI), and 1668-1840 (HRPP…PGRL). Positions 1182 to 1194 (PTTAGPASASTPT) are enriched in low complexity. A compositionally biased stretch (basic residues) spans 1199–1208 (KPRGRGRGRG). Over residues 1209-1223 (RKAEEAGGTRLEPLK) the composition is skewed to basic and acidic residues. Lysine 1223 bears the N6-acetyllysine mark. The span at 1239 to 1257 (GTSSGDAISGTDHNSLDSS) shows a compositional bias: polar residues. Threonine 1304 is subject to Phosphothreonine. 2 stretches are compositionally biased toward pro residues: residues 1306-1317 (PLSPPKSVPPSV) and 1324-1338 (PQPPATPAVPHPPPS). Serine 1308 is subject to Phosphoserine. Phosphoserine occurs at positions 1381, 1382, and 1387. Pro residues-rich tracts occupy residues 1420-1438 (DGPPLAPAAAVPGPPPLPG) and 1458-1535 (PPTP…APSP). Basic and acidic residues predominate over residues 1541–1553 (PDTRPLHLAKKQE). The residue at position 1561 (threonine 1561) is a Phosphothreonine. Serine 1568 is subject to Phosphoserine. Positions 1691 to 1703 (APPPKAPAPPPKP) are enriched in pro residues. Basic and acidic residues-rich tracts occupy residues 1704–1715 (ETPEKTTSEKPP) and 1737–1769 (PVEKEKEKEKVTRGERPLRGERATSGRQTRPER). Threonine 1705 is modified (phosphothreonine). The span at 1817–1829 (GSSSDSESSPGAP) shows a compositional bias: low complexity. Phosphoserine is present on serine 1925.

The protein localises to the nucleus. It is found in the postsynaptic density. The protein resides in the synapse. Its subcellular location is the synaptosome. The protein is Proline-rich protein 12 of Homo sapiens (Human).